Reading from the N-terminus, the 416-residue chain is MSDSGLLALQPWIRELILGSETLSSPRTGQLLKVLQDSETPGPSSAPDTPDTGAVLLVSDGTHSVRCVVTRNAIDTSDWEEKELGFRGTEGRLLLLQACGLRVQVAQDHAPAEFYLQVDRFNLLPTEQPRIQVTGCNQDSDVQRKLNECLEDHLSESASSSAGLTLSQLLDEVREDQDHRGALVCLAKSCLVLKGPCTTTPLTDWITSGSQALGKAVFTVSGSLLHIPEGEEQILSSTGSSQKARGTSASPSHMPLEESGASVSLLSALATSDPGQMDSSQSPPAVGSTSPRAQAPTSPPCNSTPSSLLLNCSPSLSPLHPAPRSHQSCETRAQAPKLEFQCSFKKRQLLPRTSAQELCSVWEPPERHRDTSAFQYKYETPSASLHTQVQTARLSPQLVAWALNIVMESESELTQV.

Positions 11–13 match the PWI motif; sequence PWI. A Phosphoserine modification is found at serine 25. Positions 156–245 are interaction with POT1; sequence ESASSSAGLT…SSTGSSQKAR (90 aa). Residues 234 to 251 are compositionally biased toward polar residues; sequence ILSSTGSSQKARGTSASP. The interval 234–306 is disordered; the sequence is ILSSTGSSQK…TSPPCNSTPS (73 aa). Low complexity predominate over residues 259–272; the sequence is SGASVSLLSALATS. Over residues 273–292 the composition is skewed to polar residues; that stretch reads DPGQMDSSQSPPAVGSTSPR. Phosphoserine is present on residues serine 313 and serine 317. Residue lysine 345 forms a Glycyl lysine isopeptide (Lys-Gly) (interchain with G-Cter in SUMO2) linkage.

As to quaternary structure, component of the shelterin complex (telosome) composed of TERF1, TERF2, TINF2, TERF2IP ACD and POT1. Forms heterodimers with POT1. Identified in a complex with POT1 and single-stranded telomeric DNA. Interacts with STN1 and TINF2. As to expression, ubiquitous.

The protein resides in the nucleus. The protein localises to the chromosome. Its subcellular location is the telomere. In terms of biological role, component of the shelterin complex (telosome) that is involved in the regulation of telomere length and protection. Shelterin associates with arrays of double-stranded TTAGGG repeats added by telomerase and protects chromosome ends. Without its protective activity, telomeres are no longer hidden from the DNA damage surveillance and chromosome ends are inappropriately processed by DNA repair pathways. Promotes binding of POT1 to single-stranded telomeric DNA. Modulates the inhibitory effects of POT1 on telomere elongation. The ACD-POT1 heterodimer enhances telomere elongation by recruiting telomerase to telomeres and increasing its processivity. May play a role in organogenesis. This Mus musculus (Mouse) protein is Adrenocortical dysplasia protein.